A 310-amino-acid chain; its full sequence is MAFEIDGKCLCYHGPLLYEARVLRVYDPASQTYRDRTRTGVPLEEEDGLPAESRGREHWFVHYQGWKSTWDEWVGQERIRPYNDENLALKRQLVQDAKAAAAAAKRAKARPGKRERSPAPAAPAAPAQGPRLAVRMPVELKALLVDDWERITKERKLVALPCAPTVGDILDAYYRERTAQLASPVAQTLLHEFVEGVHLYFDQCLSHLLLYRLERLQFDEACGGAAPAASGLPAPPEPRPSAVYGGVHLLRLLSMMPELICGTTMDEKSCHTVVAQCESLLAWMATHADDLVSGDYINTSAQYEGVALGM.

Residues K8 to R80 enclose the Tudor-knot domain. A disordered region spans residues A104 to Q128. Low complexity predominate over residues P118 to A127. The MRG domain maps to Q128–L308.

The protein belongs to the MRG family. As to quaternary structure, component of the NuA4 histone acetyltransferase complex.

The protein localises to the nucleus. In terms of biological role, involved in deacetylation of histones, chromatin assembly and chromosome segregation. May act as a transcriptional oscillator, directing histone deacetylases to specific chromosomal domains. Component of the NuA4 histone acetyltransferase complex which is involved in transcriptional activation of selected genes principally by acetylation of nucleosomal histone H4 and H2A. The NuA4 complex is also involved in DNA repair. The sequence is that of Chromatin modification-related protein EAF3 (EAF3) from Eremothecium gossypii (strain ATCC 10895 / CBS 109.51 / FGSC 9923 / NRRL Y-1056) (Yeast).